A 500-amino-acid polypeptide reads, in one-letter code: Histidine ammonia-lyase (500 aa).

The 5-imidazolinone (Ala-Gly) cross-link spans 142–144 (ASG). Residue Ser-143 is modified to 2,3-didehydroalanine (Ser).

It belongs to the PAL/histidase family. Post-translationally, contains an active site 4-methylidene-imidazol-5-one (MIO), which is formed autocatalytically by cyclization and dehydration of residues Ala-Ser-Gly.

The protein localises to the cytoplasm. It catalyses the reaction L-histidine = trans-urocanate + NH4(+). Its pathway is amino-acid degradation; L-histidine degradation into L-glutamate; N-formimidoyl-L-glutamate from L-histidine: step 1/3. The polypeptide is Histidine ammonia-lyase (Macrococcus caseolyticus (strain JCSC5402) (Macrococcoides caseolyticum)).